The chain runs to 197 residues: Transmembrane 4 L6 family member 5 (197 aa).

The Cytoplasmic segment spans residues M1–C9. Residues V10 to V30 form a helical membrane-spanning segment. The Extracellular portion of the chain corresponds to P31 to Q46. Residues V47–A67 traverse the membrane as a helical segment. Residues V68 to S90 are Cytoplasmic-facing. A helical membrane pass occupies residues V91–G111. Residues V91–H197 are interaction with MTOR and CASTOR1. Residues L112–T157 are Extracellular-facing. Residue W124–E129 coordinates L-arginine. Residues N138 and N155 are each glycosylated (N-linked (GlcNAc...) asparagine). Residues L158–V178 traverse the membrane as a helical segment. Over N179–H197 the chain is Cytoplasmic.

The protein belongs to the L6 tetraspanin family. Interacts with MTOR; the interaction is positively regulated by arginine and is negatively regulated by leucine. Interacts with SLC38A9. Interacts with SLC7A1; the interaction is negatively regulated by arginine. Interacts with CASTOR1; the interaction is positively regulated by leucine and is negatively regulated by arginine. As to expression, intestine. Overexpressed in pancreatic cancers.

Its subcellular location is the lysosome membrane. The protein resides in the cell membrane. Functionally, acts as a lysosomal membrane arginine sensor. Forms a complex with MTOR and SLC38A9 on lysosomal membranes in an arginine-regulated manner, leading to arginine efflux which enables the activation of mTORC1 which subsequently leads to RPS6KB1 and EIF4EBP1 phosphorylations. Facilitates cell cycle G1/S phase progression and the translocation of the CDK4-CCND1 complex into the nucleus. CDKN1B and RHOA/ROCK signaling activity are involved in TM4SF5-mediated acceleration of G1/S phase progression. The protein is Transmembrane 4 L6 family member 5 (TM4SF5) of Homo sapiens (Human).